A 156-amino-acid polypeptide reads, in one-letter code: Large ribosomal subunit protein uL22c (156 aa).

Belongs to the universal ribosomal protein uL22 family. In terms of assembly, part of the 50S ribosomal subunit.

The protein localises to the plastid. The protein resides in the chloroplast. In terms of biological role, this protein binds specifically to 23S rRNA. Functionally, the globular domain of the protein is located near the polypeptide exit tunnel on the outside of the subunit, while an extended beta-hairpin is found that lines the wall of the exit tunnel in the center of the 70S ribosome. This chain is Large ribosomal subunit protein uL22c (rpl22), found in Buxus microphylla (Littleleaf boxwood).